A 204-amino-acid chain; its full sequence is Large ribosomal subunit protein eL15B (204 aa).

A disordered region spans residues 165–185; sequence TATGKKSRGINKGHKFNNTKA. The span at 169–185 shows a compositional bias: basic residues; it reads KKSRGINKGHKFNNTKA.

It belongs to the eukaryotic ribosomal protein eL15 family. In terms of assembly, component of the large ribosomal subunit (LSU). Mature yeast ribosomes consist of a small (40S) and a large (60S) subunit. The 40S small subunit contains 1 molecule of ribosomal RNA (18S rRNA) and 33 different proteins (encoded by 57 genes). The large 60S subunit contains 3 rRNA molecules (25S, 5.8S and 5S rRNA) and 46 different proteins (encoded by 81 genes).

It is found in the cytoplasm. Its function is as follows. Component of the ribosome, a large ribonucleoprotein complex responsible for the synthesis of proteins in the cell. The small ribosomal subunit (SSU) binds messenger RNAs (mRNAs) and translates the encoded message by selecting cognate aminoacyl-transfer RNA (tRNA) molecules. The large subunit (LSU) contains the ribosomal catalytic site termed the peptidyl transferase center (PTC), which catalyzes the formation of peptide bonds, thereby polymerizing the amino acids delivered by tRNAs into a polypeptide chain. The nascent polypeptides leave the ribosome through a tunnel in the LSU and interact with protein factors that function in enzymatic processing, targeting, and the membrane insertion of nascent chains at the exit of the ribosomal tunnel. This chain is Large ribosomal subunit protein eL15B, found in Saccharomyces cerevisiae (strain ATCC 204508 / S288c) (Baker's yeast).